Reading from the N-terminus, the 482-residue chain is tRNA sulfurtransferase (482 aa).

The region spanning 61–165 (AQYLETLACI…NDELYIISAV (105 aa)) is the THUMP domain. ATP is bound by residues 183–184 (LL), K265, G287, and Q296. An intrachain disulfide couples C344 to C456. The 79-residue stretch at 404–482 (LAADEVILDI…GFDNVKVYRP (79 aa)) folds into the Rhodanese domain. Residue C456 is the Cysteine persulfide intermediate of the active site.

It belongs to the ThiI family.

It localises to the cytoplasm. It catalyses the reaction [ThiI sulfur-carrier protein]-S-sulfanyl-L-cysteine + a uridine in tRNA + 2 reduced [2Fe-2S]-[ferredoxin] + ATP + H(+) = [ThiI sulfur-carrier protein]-L-cysteine + a 4-thiouridine in tRNA + 2 oxidized [2Fe-2S]-[ferredoxin] + AMP + diphosphate. The enzyme catalyses [ThiS sulfur-carrier protein]-C-terminal Gly-Gly-AMP + S-sulfanyl-L-cysteinyl-[cysteine desulfurase] + AH2 = [ThiS sulfur-carrier protein]-C-terminal-Gly-aminoethanethioate + L-cysteinyl-[cysteine desulfurase] + A + AMP + 2 H(+). The protein operates within cofactor biosynthesis; thiamine diphosphate biosynthesis. Functionally, catalyzes the ATP-dependent transfer of a sulfur to tRNA to produce 4-thiouridine in position 8 of tRNAs, which functions as a near-UV photosensor. Also catalyzes the transfer of sulfur to the sulfur carrier protein ThiS, forming ThiS-thiocarboxylate. This is a step in the synthesis of thiazole, in the thiamine biosynthesis pathway. The sulfur is donated as persulfide by IscS. In Aeromonas salmonicida (strain A449), this protein is tRNA sulfurtransferase.